The following is a 357-amino-acid chain: Probable leucine aminopeptidase ARB_00576 (357 aa).

An N-terminal signal peptide occupies residues 1-15 (MKVLAALALSALAMA). A glycan (N-linked (GlcNAc...) asparagine) is linked at Asn76. His167 and Asp185 together coordinate Zn(2+). The disordered stretch occupies residues 169 to 188 (DSINGNNPQGEAPGADDNGS). Asn186 carries N-linked (GlcNAc...) asparagine glycosylation. The Zn(2+) site is built by Glu224 and Asp251. Asn269 carries N-linked (GlcNAc...) asparagine glycosylation. Cys291 and Cys295 are joined by a disulfide. His324 provides a ligand contact to Zn(2+).

Belongs to the peptidase M28 family. M28E subfamily. As to quaternary structure, monomer. Requires Zn(2+) as cofactor.

It is found in the secreted. In terms of biological role, probable extracellular aminopeptidase which contributes to pathogenicity. This is Probable leucine aminopeptidase ARB_00576 from Arthroderma benhamiae (strain ATCC MYA-4681 / CBS 112371) (Trichophyton mentagrophytes).